We begin with the raw amino-acid sequence, 185 residues long: Photosystem I assembly protein Ycf4 (185 aa).

2 helical membrane-spanning segments follow: residues 24 to 44 and 66 to 86; these read YLIG…SISS and IIMG…WYLV.

Belongs to the Ycf4 family.

The protein localises to the cellular thylakoid membrane. Its function is as follows. Seems to be required for the assembly of the photosystem I complex. This Prochlorococcus marinus (strain MIT 9515) protein is Photosystem I assembly protein Ycf4.